The primary structure comprises 357 residues: DNA replication and repair protein RecF (357 aa).

30 to 37 is a binding site for ATP; sequence GANGSGKT.

The protein belongs to the RecF family.

The protein resides in the cytoplasm. Its function is as follows. The RecF protein is involved in DNA metabolism; it is required for DNA replication and normal SOS inducibility. RecF binds preferentially to single-stranded, linear DNA. It also seems to bind ATP. The sequence is that of DNA replication and repair protein RecF from Enterobacter sp. (strain 638).